A 134-amino-acid chain; its full sequence is Insulin-like peptide 4 (134 aa).

A signal peptide spans 1-26; it reads MSLIRLGLALLLLLATVSQLLQPVQG. 3 disulfides stabilise this stretch: Cys31–Cys120, Cys43–Cys133, and Cys119–Cys124. The propeptide at 54–108 is connecting peptide; sequence SSASKDARVRDLIRKLQQPDEDIEQETETGRLKQKHTDADTEKGVPPAVGSGRKL. A disordered region spans residues 72–107; the sequence is PDEDIEQETETGRLKQKHTDADTEKGVPPAVGSGRK. Residues 81-96 are compositionally biased toward basic and acidic residues; the sequence is ETGRLKQKHTDADTEK.

It belongs to the insulin family. Heterodimer of a B chain and an A chain linked by two disulfide bonds. In terms of tissue distribution, expressed at a high level in the embryonic mesoderm, with expression continuing after gastrulation and reducing from stage 12 onwards. Highly expressed in the embryonic anterior midgut rudiment and larval midgut.

Its subcellular location is the secreted. Its function is as follows. Possible ligand of InR/insulin-like receptor. The chain is Insulin-like peptide 4 from Drosophila melanogaster (Fruit fly).